The chain runs to 1025 residues: Synapsin (1025 aa).

Disordered stretches follow at residues 1-94 (MKRG…SRES), 439-784 (VCRP…NYGS), 872-910 (YDSN…KHSD), and 995-1025 (DFSD…LDLK). Pro residues predominate over residues 34–52 (TKPPVAGGPPNMPPPPAPG). Residues 454–463 (SRSSVSSRAE) show a composition bias toward low complexity. Over residues 472 to 492 (PTPPLPAGPRPAPMGGPPPIP) the composition is skewed to pro residues. Composition is skewed to low complexity over residues 499 to 546 (VGSI…SSVS) and 594 to 626 (SETS…QFSF). At S539 the chain carries Phosphoserine. Over residues 651 to 673 (TTASSAVRPESSVSVSDSRNTDT) the composition is skewed to polar residues. Basic and acidic residues predominate over residues 690 to 702 (QQERVNPFDKEPS). Residues 703 to 725 (KSGSAASIHTSSSSSISSSSISS) show a composition bias toward low complexity. Residues 726-735 (RINRNGNAIQ) show a composition bias toward polar residues. The segment covering 736–749 (SPPPPAGPPPPPPT) has biased composition (pro residues). Over residues 750–759 (NVTAVGSNAN) the composition is skewed to polar residues. Residues 760 to 772 (SSSGYRNSFSSSL) show a composition bias toward low complexity. The segment covering 872–904 (YDSNSIASQGEGLNNPSDLPSYTRPSYSRSESN) has biased composition (polar residues). A compositionally biased stretch (low complexity) spans 995-1007 (DFSDSGSMSSIGS).

The protein belongs to the synapsin family. As to quaternary structure, identified in a complex with Syt1 and nwk. As to expression, widely expressed in the embryonic and adult nervous system synaptic terminals.

The protein resides in the synapse. In terms of biological role, plays a significant role in nervous system function, which is subtle at the cellular level but manifests itself in complex behavior. This is Synapsin (Syn) from Drosophila melanogaster (Fruit fly).